The following is a 172-amino-acid chain: Myosin regulatory light polypeptide 9 (172 aa).

Residues 1–16 (MSSKRAKAKTTKKRPQ) show a composition bias toward basic residues. A disordered region spans residues 1–20 (MSSKRAKAKTTKKRPQRATS). At serine 2 the chain carries N-acetylserine. At threonine 19 the chain carries Phosphothreonine; by MLCK, CIT and ROCK2. Serine 20 carries the phosphoserine; by CDC42BP, CIT, MLCK, PAK1, ROCK1, ROCK2, DAPK1, DAPK2 and ZIPK/DAPK3 modification. EF-hand domains lie at 29-64 (SQIQ…LGKN), 98-133 (DPED…MGDR), and 134-169 (FTDE…GAKD). Residues aspartate 42, asparagine 44, aspartate 46, and aspartate 53 each contribute to the Ca(2+) site.

As to quaternary structure, myosin is a hexamer of 2 heavy chains and 4 light chains: interacts with myosin heavy chain MYO19. Interacts with LUZP1; the interaction results in inhibition of phosphorylation of MYL9 by DAPK3. Phosphorylation increases the actin-activated myosin ATPase activity and thereby regulates the contractile activity. It is required to generate the driving force in the migration of the cells but not necessary for localization of myosin-2 at the leading edge. Phosphorylation is required for myotube formation. Phosphorylated by DAPK3; DAPK3-mediated phosphorylation is inhibited by LUZP1. In terms of tissue distribution, smooth muscle tissues and in some, but not all, nonmuscle cells.

The protein resides in the cytoplasm. It is found in the cytoskeleton. It localises to the cell cortex. Functionally, myosin regulatory subunit that plays an important role in regulation of both smooth muscle and nonmuscle cell contractile activity via its phosphorylation. Implicated in cytokinesis, receptor capping, and cell locomotion. In myoblasts, may regulate PIEZO1-dependent cortical actomyosin assembly involved in myotube formation. In Homo sapiens (Human), this protein is Myosin regulatory light polypeptide 9 (MYL9).